Here is a 271-residue protein sequence, read N- to C-terminus: N-acylmannosamine 1-dehydrogenase (271 aa).

20–44 (VTGAAGGIGRATVEAYLREGASVVA) is a binding site for NAD(+). Serine 153 provides a ligand contact to substrate. The Proton acceptor role is filled by tyrosine 166.

The protein belongs to the short-chain dehydrogenases/reductases (SDR) family.

It carries out the reaction an N-acyl-D-mannosamine + NAD(+) = an N-acyl-D-mannosaminolactone + NADH + H(+). Functionally, acts on acetyl-D-mannosamine and glycolyl-D-mannosamine. The protein is N-acylmannosamine 1-dehydrogenase of Flavobacterium sp. (strain 141-8).